Reading from the N-terminus, the 109-residue chain is Putative double-stranded DNA mimic protein plu2488 (109 aa).

This sequence belongs to the putative dsDNA mimic protein family.

Functionally, may act as a double-stranded DNA (dsDNA) mimic. Probably regulates the activity of a dsDNA-binding protein. In Photorhabdus laumondii subsp. laumondii (strain DSM 15139 / CIP 105565 / TT01) (Photorhabdus luminescens subsp. laumondii), this protein is Putative double-stranded DNA mimic protein plu2488.